A 191-amino-acid chain; its full sequence is uncharacterized protein (191 aa).

This is an uncharacterized protein from Treponema pallidum (strain Nichols).